Consider the following 193-residue polypeptide: dCTP deaminase (193 aa).

Residues Arg110 to Arg115, Asp128, Val136 to Glu138, Tyr171, Lys178, and Gln182 each bind dCTP. The Proton donor/acceptor role is filled by Glu138. The segment at Asp168–Asp193 is disordered. Basic and acidic residues predominate over residues Pro170–Tyr179.

It belongs to the dCTP deaminase family. As to quaternary structure, homotrimer.

It carries out the reaction dCTP + H2O + H(+) = dUTP + NH4(+). It functions in the pathway pyrimidine metabolism; dUMP biosynthesis; dUMP from dCTP (dUTP route): step 1/2. Functionally, catalyzes the deamination of dCTP to dUTP. The chain is dCTP deaminase from Photorhabdus laumondii subsp. laumondii (strain DSM 15139 / CIP 105565 / TT01) (Photorhabdus luminescens subsp. laumondii).